The primary structure comprises 173 residues: NADH-ubiquinone oxidoreductase chain 6 (173 aa).

5 helical membrane-spanning segments follow: residues 1 to 21 (MTYF…AVAS), 27 to 47 (YGVV…VSLG), 48 to 68 (VSFV…VVFV), 87 to 107 (VVGY…LGGL), and 139 to 159 (CGVG…FVVL).

This sequence belongs to the complex I subunit 6 family. Core subunit of respiratory chain NADH dehydrogenase (Complex I) which is composed of 45 different subunits.

It localises to the mitochondrion inner membrane. The catalysed reaction is a ubiquinone + NADH + 5 H(+)(in) = a ubiquinol + NAD(+) + 4 H(+)(out). Core subunit of the mitochondrial membrane respiratory chain NADH dehydrogenase (Complex I) which catalyzes electron transfer from NADH through the respiratory chain, using ubiquinone as an electron acceptor. Essential for the catalytic activity and assembly of complex I. The protein is NADH-ubiquinone oxidoreductase chain 6 (MT-ND6) of Gallus gallus (Chicken).